Here is a 374-residue protein sequence, read N- to C-terminus: Alcohol dehydrogenase 1 (374 aa).

At serine 1 the chain carries N-acetylserine. 7 residues coordinate Zn(2+): cysteine 46, histidine 67, cysteine 97, cysteine 100, cysteine 103, cysteine 111, and cysteine 174. NAD(+)-binding positions include glycine 199–glycine 204, aspartate 223, lysine 228, valine 292–valine 294, and arginine 369.

This sequence belongs to the zinc-containing alcohol dehydrogenase family. Class-I subfamily. It depends on Zn(2+) as a cofactor.

It is found in the cytoplasm. The catalysed reaction is a primary alcohol + NAD(+) = an aldehyde + NADH + H(+). It carries out the reaction a secondary alcohol + NAD(+) = a ketone + NADH + H(+). The chain is Alcohol dehydrogenase 1 from Alligator mississippiensis (American alligator).